A 376-amino-acid polypeptide reads, in one-letter code: Queuine tRNA-ribosyltransferase (376 aa).

Asp90 (proton acceptor) is an active-site residue. Substrate is bound by residues 90–94 (DSGGF), Asp144, Gln193, and Gly220. The segment at 251-257 (GVGTPED) is RNA binding. The active-site Nucleophile is Asp270. An RNA binding; important for wobble base 34 recognition region spans residues 275–279 (TRNAR). The Zn(2+) site is built by Cys308, Cys310, Cys313, and His339.

This sequence belongs to the queuine tRNA-ribosyltransferase family. As to quaternary structure, homodimer. Within each dimer, one monomer is responsible for RNA recognition and catalysis, while the other monomer binds to the replacement base PreQ1. Zn(2+) is required as a cofactor.

It catalyses the reaction 7-aminomethyl-7-carbaguanine + guanosine(34) in tRNA = 7-aminomethyl-7-carbaguanosine(34) in tRNA + guanine. It functions in the pathway tRNA modification; tRNA-queuosine biosynthesis. Catalyzes the base-exchange of a guanine (G) residue with the queuine precursor 7-aminomethyl-7-deazaguanine (PreQ1) at position 34 (anticodon wobble position) in tRNAs with GU(N) anticodons (tRNA-Asp, -Asn, -His and -Tyr). Catalysis occurs through a double-displacement mechanism. The nucleophile active site attacks the C1' of nucleotide 34 to detach the guanine base from the RNA, forming a covalent enzyme-RNA intermediate. The proton acceptor active site deprotonates the incoming PreQ1, allowing a nucleophilic attack on the C1' of the ribose to form the product. After dissociation, two additional enzymatic reactions on the tRNA convert PreQ1 to queuine (Q), resulting in the hypermodified nucleoside queuosine (7-(((4,5-cis-dihydroxy-2-cyclopenten-1-yl)amino)methyl)-7-deazaguanosine). This is Queuine tRNA-ribosyltransferase from Campylobacter concisus (strain 13826).